The primary structure comprises 224 residues: tRNA (guanine-N(7)-)-methyltransferase (224 aa).

S-adenosyl-L-methionine is bound by residues glutamate 57, aspartate 82, and aspartate 109. Aspartate 167 is a substrate binding site.

Belongs to the class I-like SAM-binding methyltransferase superfamily. TrmB family.

It catalyses the reaction guanosine(46) in tRNA + S-adenosyl-L-methionine = N(7)-methylguanosine(46) in tRNA + S-adenosyl-L-homocysteine. It functions in the pathway tRNA modification; N(7)-methylguanine-tRNA biosynthesis. Catalyzes the formation of N(7)-methylguanine at position 46 (m7G46) in tRNA. The polypeptide is tRNA (guanine-N(7)-)-methyltransferase (Chloroflexus aurantiacus (strain ATCC 29366 / DSM 635 / J-10-fl)).